The following is a 282-amino-acid chain: Probable endonuclease LCL3 (282 aa).

Residues 55-71 (SNLIPTVLLTSGILFAV) traverse the membrane as a helical segment. The TNase-like domain occupies 95–256 (RSILGKVTSV…KKKGKGLWKA (162 aa)). Residue Arg-144 is part of the active site. Asp-149 contacts Ca(2+). Active-site residues include Glu-152 and Arg-192.

The protein belongs to the LCL3 family.

It localises to the mitochondrion. The protein localises to the membrane. The polypeptide is Probable endonuclease LCL3 (LCL3) (Arthroderma otae (strain ATCC MYA-4605 / CBS 113480) (Microsporum canis)).